We begin with the raw amino-acid sequence, 434 residues long: ATP-dependent RNA helicase SUB2 (434 aa).

Positions 1–16 are enriched in acidic residues; the sequence is MSGEEDLIDYSDDELN. A disordered region spans residues 1–32; the sequence is MSGEEDLIDYSDDELNNETTAPASNGKKGDAA. Positions 50–78 match the Q motif motif; it reads TGFRDFLLKPELLRAIADCGFEHPSEVQQ. Positions 81 to 256 constitute a Helicase ATP-binding domain; the sequence is IPQAMLGGDI…RKFMQNPTEH (176 aa). Residue 94 to 101 coordinates ATP; that stretch reads AKSGLGKT. Positions 203 to 206 match the DEAD box motif; the sequence is DECD. The Helicase C-terminal domain maps to 268–429; the sequence is GLQQYYIPLE…EFPKEGIDAS (162 aa).

The protein belongs to the DEAD box helicase family. DECD subfamily.

Its subcellular location is the nucleus. It catalyses the reaction ATP + H2O = ADP + phosphate + H(+). ATP-binding RNA helicase involved in transcription elongation and required for the export of mRNA out of the nucleus. SUB2 also plays a role in pre-mRNA splicing and spliceosome assembly. May be involved in rDNA and telomeric silencing, and maintenance of genome integrity. This Chaetomium globosum (strain ATCC 6205 / CBS 148.51 / DSM 1962 / NBRC 6347 / NRRL 1970) (Soil fungus) protein is ATP-dependent RNA helicase SUB2 (SUB2).